We begin with the raw amino-acid sequence, 199 residues long: Thymidylate kinase (199 aa).

7 to 14 is a binding site for ATP; the sequence is GIDGSGKT.

It belongs to the thymidylate kinase family.

The catalysed reaction is dTMP + ATP = dTDP + ADP. In terms of biological role, phosphorylation of dTMP to form dTDP in both de novo and salvage pathways of dTTP synthesis. The sequence is that of Thymidylate kinase from Tropheryma whipplei (strain Twist) (Whipple's bacillus).